A 389-amino-acid chain; its full sequence is Putative sugar efflux transporter DR_1322 (389 aa).

Transmembrane regions (helical) follow at residues 10–30 (AVLL…LFAV), 34–54 (GMTP…AVLV), 69–89 (KPLV…LSGV), 96–116 (MATG…VFAF), 135–155 (VLRA…AAVL), 161–181 (SGVF…LLFI), 211–231 (GWVV…MVMF), 246–266 (VGFL…LFVL), 281–301 (LLLF…PLLI), 308–328 (AAVL…LMPG), 341–361 (SVVG…VFGY), and 363–383 (PVFL…LWAT).

Belongs to the major facilitator superfamily. Set transporter family.

Its subcellular location is the cell membrane. Its function is as follows. Involved in the efflux of sugars. The physiological role may be the detoxification of non-metabolizable sugar analogs. In Deinococcus radiodurans (strain ATCC 13939 / DSM 20539 / JCM 16871 / CCUG 27074 / LMG 4051 / NBRC 15346 / NCIMB 9279 / VKM B-1422 / R1), this protein is Putative sugar efflux transporter DR_1322.